The following is a 562-amino-acid chain: MTTTTTVKSDIEIAQEASMKKIQEIAADLNILEDELEPYGHYKGKLSLDIFKRLQDEKDGKVVLVTAINPTPAGEGKSTVTVGLGQAFNKIGKKTVIALREPSLGPTMGLKGGAAGGGFSQVVPMEDINLHFTGDIHAITTANNALAAFIDNHIQQGNTLGIDTRKIVWKRCVDLNDRALRNVVIGLGGPVQGVPREDGFDITVASEIMAVFCLATDIQDLKARLSRIVVAYNFANQPVTVKDLGVEGALTLLLKDALKPNLVQTLENTPAIIHGGPFANIAHGCNSVIATTMAAKLGDYVITEAGFGADLGAEKFLDIKARAAGIKPEAVVIVATIRALKMHGGVAKDQLKEENVDALAKGMENLQKHVETIQSFGVPFVIAINKFITDTDAEVTYLQEWCNERGYAVSLTEVWEKGGQGGVDLAEKVLKEIEKGENNYAPLYELELPLEEKIRTIAQKVYGAKDIEFAPKARKQLAQYEGEGWSNLPVCMAKTQYSLSDDVTKLGRPSDFIVTIRELKPSIGAGFIVALTGTMLTMPGLPKQPAALQMDVNEDGKAVGLF.

71–78 (TPAGEGKS) provides a ligand contact to ATP.

It belongs to the formate--tetrahydrofolate ligase family.

It catalyses the reaction (6S)-5,6,7,8-tetrahydrofolate + formate + ATP = (6R)-10-formyltetrahydrofolate + ADP + phosphate. The protein operates within one-carbon metabolism; tetrahydrofolate interconversion. The protein is Formate--tetrahydrofolate ligase of Bacillus cereus (strain ATCC 14579 / DSM 31 / CCUG 7414 / JCM 2152 / NBRC 15305 / NCIMB 9373 / NCTC 2599 / NRRL B-3711).